A 303-amino-acid chain; its full sequence is tRNA pseudouridine synthase B (303 aa).

D53 serves as the catalytic Nucleophile.

Belongs to the pseudouridine synthase TruB family. Type 1 subfamily.

It carries out the reaction uridine(55) in tRNA = pseudouridine(55) in tRNA. Functionally, responsible for synthesis of pseudouridine from uracil-55 in the psi GC loop of transfer RNAs. This is tRNA pseudouridine synthase B from Zymomonas mobilis subsp. mobilis (strain ATCC 31821 / ZM4 / CP4).